Here is a 273-residue protein sequence, read N- to C-terminus: Homeobox protein Nkx-2.2 (273 aa).

Disordered stretches follow at residues 1 to 56 (MSLT…LDAV) and 91 to 131 (AASA…KRKR). Residues 20-38 (DTNDEDGSVAEGPEEESEG) are compositionally biased toward acidic residues. Positions 128 to 187 (KRKRRVLFSKAQTYELERRFRQQRYLSAPEREHLASLIRLTPTQVKIWFQNHRYKMKRAR) form a DNA-binding region, homeobox.

It belongs to the NK-2 homeobox family. Interacts with OLIG2. In terms of tissue distribution, expressed in restricted areas of the developing CNS: the hindbrain and forebrain, and pancreas.

Its subcellular location is the nucleus. Functionally, transcriptional activator involved in the development of insulin-producting beta cells in the endocrine pancreas. May also be involved in specifying diencephalic neuromeric boundaries, and in controlling the expression of genes that play a role in axonal guidance. Binds to elements within the NEUROD1 promoter. This is Homeobox protein Nkx-2.2 (Nkx2-2) from Mus musculus (Mouse).